The following is a 151-amino-acid chain: Transcriptional regulator MraZ (151 aa).

2 SpoVT-AbrB domains span residues 5-52 (ANAI…PLSE) and 81-124 (AVDL…DEDA).

Belongs to the MraZ family. As to quaternary structure, forms oligomers.

It is found in the cytoplasm. It localises to the nucleoid. This chain is Transcriptional regulator MraZ, found in Pseudomonas syringae pv. syringae (strain B728a).